Here is a 786-residue protein sequence, read N- to C-terminus: Ciliated left-right organizer ZP-N domains-containing protein (786 aa).

The N-terminal stretch at 1 to 18 (MWGSVAVVWAICLACIQP) is a signal peptide.

As to expression, expressed specifically by cells of the ciliated left-right organizer.

In terms of biological role, plays a role in left-right patterning process. The protein is Ciliated left-right organizer ZP-N domains-containing protein (Ciroz) of Mus musculus (Mouse).